A 314-amino-acid chain; its full sequence is DNA topoisomerase I (314 aa).

One can recognise a Topo IB-type catalytic domain in the interval 77–314 (IQNRNAKRDR…VDHVKSSTDG (238 aa)). Tyrosine 274 (O-(3'-phospho-DNA)-tyrosine intermediate) is an active-site residue.

The protein belongs to the type IB topoisomerase family.

It is found in the virion. The enzyme catalyses ATP-independent breakage of single-stranded DNA, followed by passage and rejoining.. Releases the supercoiling and torsional tension of DNA introduced during the DNA replication and transcription by transiently cleaving and rejoining one strand of the DNA duplex. Introduces a single-strand break via transesterification at the specific target site 5'-[CT]CCTTp site in duplex DNA. The scissile phosphodiester is attacked by the catalytic tyrosine of the enzyme, resulting in the formation of a DNA-(3'-phosphotyrosyl)-enzyme intermediate and the expulsion of a 5'-OH DNA strand. The free DNA strand then undergoes passage around the unbroken strand thus removing DNA supercoils. Finally, in the religation step, the DNA 5'-OH attacks the covalent intermediate to expel the active-site tyrosine and restore the DNA phosphodiester backbone. This is DNA topoisomerase I (OPG111) from Cynomys gunnisoni (Gunnison's prairie dog).